Here is a 512-residue protein sequence, read N- to C-terminus: Histidine ammonia-lyase (512 aa).

Positions 143–145 form a cross-link, 5-imidazolinone (Ala-Gly); sequence ASG. S144 is subject to 2,3-didehydroalanine (Ser).

It belongs to the PAL/histidase family. Post-translationally, contains an active site 4-methylidene-imidazol-5-one (MIO), which is formed autocatalytically by cyclization and dehydration of residues Ala-Ser-Gly.

The protein resides in the cytoplasm. The catalysed reaction is L-histidine = trans-urocanate + NH4(+). It participates in amino-acid degradation; L-histidine degradation into L-glutamate; N-formimidoyl-L-glutamate from L-histidine: step 1/3. The chain is Histidine ammonia-lyase from Ruegeria pomeroyi (strain ATCC 700808 / DSM 15171 / DSS-3) (Silicibacter pomeroyi).